The primary structure comprises 433 residues: Glutamate-1-semialdehyde 2,1-aminomutase (433 aa).

At lysine 266 the chain carries N6-(pyridoxal phosphate)lysine.

This sequence belongs to the class-III pyridoxal-phosphate-dependent aminotransferase family. HemL subfamily. In terms of assembly, homodimer. It depends on pyridoxal 5'-phosphate as a cofactor.

It is found in the cytoplasm. The catalysed reaction is (S)-4-amino-5-oxopentanoate = 5-aminolevulinate. It participates in porphyrin-containing compound metabolism; protoporphyrin-IX biosynthesis; 5-aminolevulinate from L-glutamyl-tRNA(Glu): step 2/2. The chain is Glutamate-1-semialdehyde 2,1-aminomutase from Psychrobacter arcticus (strain DSM 17307 / VKM B-2377 / 273-4).